We begin with the raw amino-acid sequence, 97 residues long: Protein YcgL (97 aa).

In terms of domain architecture, YcgL spans 1 to 85 (MLCVIYRSSK…PPEDLLKQHL (85 aa)).

This Escherichia fergusonii (strain ATCC 35469 / DSM 13698 / CCUG 18766 / IAM 14443 / JCM 21226 / LMG 7866 / NBRC 102419 / NCTC 12128 / CDC 0568-73) protein is Protein YcgL.